A 397-amino-acid chain; its full sequence is Adenylosuccinate synthetase (397 aa).

GTP is bound by residues 11-17 (GDEGKGK) and 39-41 (GHT). The Proton acceptor role is filled by D12. D12 and G39 together coordinate Mg(2+). IMP contacts are provided by residues 12 to 15 (DEGK), 37 to 40 (NAGH), T125, R139, Q212, T227, and R290. The active-site Proton donor is the H40. Residue 286 to 292 (STTGRPR) coordinates substrate. GTP-binding positions include R292, 318-320 (KAD), and 386-388 (STG).

This sequence belongs to the adenylosuccinate synthetase family. Homodimer. It depends on Mg(2+) as a cofactor.

The protein resides in the cytoplasm. It carries out the reaction IMP + L-aspartate + GTP = N(6)-(1,2-dicarboxyethyl)-AMP + GDP + phosphate + 2 H(+). Its pathway is purine metabolism; AMP biosynthesis via de novo pathway; AMP from IMP: step 1/2. Its function is as follows. Plays an important role in the de novo pathway of purine nucleotide biosynthesis. Catalyzes the first committed step in the biosynthesis of AMP from IMP. This chain is Adenylosuccinate synthetase, found in Thermotoga maritima (strain ATCC 43589 / DSM 3109 / JCM 10099 / NBRC 100826 / MSB8).